A 600-amino-acid chain; its full sequence is Elongation factor 4 (600 aa).

Residues 7 to 189 (SLIRNFSIIA…ALVQRLPAPT (183 aa)) enclose the tr-type G domain. GTP is bound by residues 19–24 (DHGKST) and 136–139 (NKID).

Belongs to the TRAFAC class translation factor GTPase superfamily. Classic translation factor GTPase family. LepA subfamily.

It is found in the cell inner membrane. It catalyses the reaction GTP + H2O = GDP + phosphate + H(+). Required for accurate and efficient protein synthesis under certain stress conditions. May act as a fidelity factor of the translation reaction, by catalyzing a one-codon backward translocation of tRNAs on improperly translocated ribosomes. Back-translocation proceeds from a post-translocation (POST) complex to a pre-translocation (PRE) complex, thus giving elongation factor G a second chance to translocate the tRNAs correctly. Binds to ribosomes in a GTP-dependent manner. The sequence is that of Elongation factor 4 from Gluconobacter oxydans (strain 621H) (Gluconobacter suboxydans).